Consider the following 557-residue polypeptide: Formate--tetrahydrofolate ligase (557 aa).

Residue Thr-66–Ser-73 coordinates ATP.

It belongs to the formate--tetrahydrofolate ligase family.

It carries out the reaction (6S)-5,6,7,8-tetrahydrofolate + formate + ATP = (6R)-10-formyltetrahydrofolate + ADP + phosphate. It participates in one-carbon metabolism; tetrahydrofolate interconversion. This is Formate--tetrahydrofolate ligase from Clostridium botulinum (strain 657 / Type Ba4).